The sequence spans 448 residues: Probable glycine dehydrogenase (decarboxylating) subunit 1 (448 aa).

The protein belongs to the GcvP family. N-terminal subunit subfamily. In terms of assembly, the glycine cleavage system is composed of four proteins: P, T, L and H. In this organism, the P 'protein' is a heterodimer of two subunits.

The enzyme catalyses N(6)-[(R)-lipoyl]-L-lysyl-[glycine-cleavage complex H protein] + glycine + H(+) = N(6)-[(R)-S(8)-aminomethyldihydrolipoyl]-L-lysyl-[glycine-cleavage complex H protein] + CO2. In terms of biological role, the glycine cleavage system catalyzes the degradation of glycine. The P protein binds the alpha-amino group of glycine through its pyridoxal phosphate cofactor; CO(2) is released and the remaining methylamine moiety is then transferred to the lipoamide cofactor of the H protein. The sequence is that of Probable glycine dehydrogenase (decarboxylating) subunit 1 from Geobacillus kaustophilus (strain HTA426).